The chain runs to 886 residues: Cytosolic carboxypeptidase-like protein 5 (886 aa).

Positions 157–570 (YPFSYSDCQD…AMAIAALDMA (414 aa)) constitute a Peptidase M14 domain. Residues histidine 252 and glutamate 255 each contribute to the Zn(2+) site. Residues 344–353 (AKSPTNQQPT) are compositionally biased toward polar residues. 2 disordered regions span residues 344 to 363 (AKSP…APLS) and 374 to 401 (EAHL…KTDP). Zn(2+) is bound at residue histidine 434. Glutamate 516 functions as the Proton donor/acceptor in the catalytic mechanism. 2 disordered regions span residues 602 to 737 (GLTS…RNMG) and 783 to 846 (TRLQ…PAFS). A compositionally biased stretch (polar residues) spans 621-635 (PKSNNSLPVSCSENA). Residues 643–654 (STGTSTGGSSSS) show a composition bias toward low complexity. Positions 655–666 (QQNSPQMKNSPS) are enriched in polar residues. Low complexity predominate over residues 714–737 (STTSSLAPSPTLASSGPTSSRNMG). The segment covering 805 to 815 (SSPTSPIPQTR) has biased composition (polar residues). Phosphoserine is present on serine 841.

This sequence belongs to the peptidase M14 family. It depends on Zn(2+) as a cofactor. As to expression, widely expressed. Highly expressed in testis, and moderately in pituitary, brain, eye and kidney.

It localises to the cytoplasm. The protein localises to the cytosol. The protein resides in the nucleus. Its subcellular location is the cytoskeleton. It is found in the spindle. It localises to the midbody. It catalyses the reaction gamma-L-glutamyl-L-glutamyl-[protein] + H2O = L-glutamyl-[protein] + L-glutamate. It carries out the reaction (L-glutamyl)(n+1)-gamma-L-glutamyl-L-glutamyl-[protein] + H2O = (L-glutamyl)(n)-gamma-L-glutamyl-L-glutamyl-[protein] + L-glutamate. The catalysed reaction is C-terminal L-alpha-aminoacyl-L-glutamyl-[tubulin] + H2O = C-terminal L-alpha-aminoacyl-[tubulin] + L-glutamate. The enzyme catalyses C-terminal L-alpha-aminoacyl-L-glutamyl-L-glutamyl-[tubulin] + H2O = C-terminal L-alpha-aminoacyl-L-glutamyl-[tubulin] + L-glutamate. Its function is as follows. Metallocarboxypeptidase that mediates deglutamylation of tubulin and non-tubulin target proteins. Catalyzes the removal of polyglutamate side chains present on the gamma-carboxyl group of glutamate residues within the C-terminal tail of alpha- and beta-tubulin. Cleaves alpha- and gamma-linked polyglutamate tubulin side-chain, as well as the branching point glutamate. Also catalyzes the removal of alpha-linked glutamate residues from the carboxy-terminus of alpha-tubulin. Mediates deglutamylation of nucleotidyltransferase CGAS, leading to CGAS antiviral defense response activation. The sequence is that of Cytosolic carboxypeptidase-like protein 5 from Mus musculus (Mouse).